We begin with the raw amino-acid sequence, 1172 residues long: DNA-directed RNA polymerase subunit beta (1172 aa).

The protein belongs to the RNA polymerase beta chain family. In terms of assembly, the RNAP catalytic core consists of 2 alpha, 1 beta, 1 beta' and 1 omega subunit. When a sigma factor is associated with the core the holoenzyme is formed, which can initiate transcription.

The catalysed reaction is RNA(n) + a ribonucleoside 5'-triphosphate = RNA(n+1) + diphosphate. DNA-dependent RNA polymerase catalyzes the transcription of DNA into RNA using the four ribonucleoside triphosphates as substrates. The polypeptide is DNA-directed RNA polymerase subunit beta (Mycobacterium sp. (strain JLS)).